The following is a 344-amino-acid chain: Coproporphyrin III ferrochelatase (344 aa).

Ser-52 provides a ligand contact to Fe-coproporphyrin III. Cys-113 serves as a coordination point for [2Fe-2S] cluster. Fe-coproporphyrin III is bound at residue Tyr-116. Positions 172 and 255 each coordinate Fe(2+). [2Fe-2S] cluster is bound by residues Cys-316, Cys-325, and Cys-330.

The protein belongs to the ferrochelatase family. [2Fe-2S] cluster is required as a cofactor.

It is found in the cytoplasm. The enzyme catalyses Fe-coproporphyrin III + 2 H(+) = coproporphyrin III + Fe(2+). Its pathway is porphyrin-containing compound metabolism; protoheme biosynthesis. Its function is as follows. Involved in coproporphyrin-dependent heme b biosynthesis. Catalyzes the insertion of ferrous iron into coproporphyrin III to form Fe-coproporphyrin III. This chain is Coproporphyrin III ferrochelatase, found in Mycobacterium bovis (strain ATCC BAA-935 / AF2122/97).